A 125-amino-acid polypeptide reads, in one-letter code: Scinderin (125 aa).

The residue at position 13 (Tyr-13) is a Phosphotyrosine. A 1,2-diacyl-sn-glycero-3-phospho-(1D-myo-inositol-4,5-bisphosphate)-binding positions include 23–30 (KGGLKYKA) and 49–57 (RLLHVKGRR). Residues 59-99 (VRATEVPLSWDSFNKGDCFIIDLGSEIYQWFGSSCNKYERL) form a Gelsolin-like 1 repeat.

The protein belongs to the villin/gelsolin family.

The protein localises to the cytoplasm. It is found in the cytoskeleton. It localises to the cell projection. Its subcellular location is the podosome. Its function is as follows. Ca(2+)-dependent actin filament-severing protein that has a regulatory function in exocytosis by affecting the organization of the microfilament network underneath the plasma membrane. In vitro, also has barbed end capping and nucleating activities in the presence of Ca(2+). Severing activity is inhibited by phosphatidylinositol 4,5-bis-phosphate (PIP2). Required for megakaryocyte differentiation, maturation, polyploidization and apoptosis with the release of platelet-like particles. Plays a role in osteoclastogenesis (OCG) and actin cytoskeletal organization in osteoclasts. Regulates chondrocyte proliferation and differentiation. Inhibits cell proliferation and tumorigenesis. Signaling is mediated by MAPK, p38 and JNK pathways. The sequence is that of Scinderin (SCIN) from Sus scrofa (Pig).